A 397-amino-acid polypeptide reads, in one-letter code: Succinate--CoA ligase [ADP-forming] subunit beta (397 aa).

The 246-residue stretch at 9-254 (KALLREFGVP…ESEEDAKEIE (246 aa)) folds into the ATP-grasp domain. Residues Lys46, 53-55 (GRG), Glu109, Ser112, and Glu117 each bind ATP. Mg(2+)-binding residues include Asn209 and Asp223. Substrate-binding positions include Asn274 and 331–333 (GIM).

Belongs to the succinate/malate CoA ligase beta subunit family. Heterotetramer of two alpha and two beta subunits. Requires Mg(2+) as cofactor.

The enzyme catalyses succinate + ATP + CoA = succinyl-CoA + ADP + phosphate. The catalysed reaction is GTP + succinate + CoA = succinyl-CoA + GDP + phosphate. It functions in the pathway carbohydrate metabolism; tricarboxylic acid cycle; succinate from succinyl-CoA (ligase route): step 1/1. In terms of biological role, succinyl-CoA synthetase functions in the citric acid cycle (TCA), coupling the hydrolysis of succinyl-CoA to the synthesis of either ATP or GTP and thus represents the only step of substrate-level phosphorylation in the TCA. The beta subunit provides nucleotide specificity of the enzyme and binds the substrate succinate, while the binding sites for coenzyme A and phosphate are found in the alpha subunit. This Nitrobacter hamburgensis (strain DSM 10229 / NCIMB 13809 / X14) protein is Succinate--CoA ligase [ADP-forming] subunit beta.